A 416-amino-acid chain; its full sequence is MSEADGLRQRRPLRPQVVTDDDGQAPEAKDGSSFSGRVFRVTFLMLAVSLTVPLLGAMMLLESPIDPQPLSFKEPPLLLGVLHPNTKLRQAERLFENQLVGPESIAHIGDVMFTGTADGRVVKLENGEIETIARFGSGPCKTRDDEPVCGRPLGIRAGPNGTLFVADAYKGLFEVNPWKREVKLLLSSETPIEGKNMSFVNDLTVTQDGRKIYFTDSSSKWQRRDYLLLVMEGTDDGRLLEYDTVTREVKVLLDQLRFPNGVQLSPAEDFVLVAETTMARIRRVYVSGLMKGGADLFVENMPGFPDNIRPSSSGGYWVGMSTIRPNPGFSMLDFLSERPWIKRMIFKLFSQETVMKFVPRYSLVLELSDSGAFRRSLHDPDGLVATYISEVHEHDGHLYLGSFRSPFLCRLSLQAV.

Positions Met-1–Ser-32 are disordered. Ser-2 carries the N-acetylserine modification. At Ser-2–Arg-40 the chain is on the cytoplasmic side. Thr-19 is modified (phosphothreonine). Residues Val-41 to Leu-61 traverse the membrane as a helical; Signal-anchor for type II membrane protein segment. At Glu-62–Val-416 the chain is on the extracellular side. 2 N-linked (GlcNAc...) asparagine glycosylation sites follow: Asn-160 and Asn-196.

It belongs to the strictosidine synthase family. In terms of tissue distribution, liver, glomerular and tubular structures of the kidney, endothelial cells, arterial wall and pancreatic islets of Langerhans (at protein level). Found ubiquitously in adult as well as in embryonic tissues. In adult tissue, the highest expression is found in the liver, placenta and heart. Found on the cell surface of monocytes. In embryonic tissue, the highest expression levels is found in the liver and the kidney.

The protein localises to the membrane. Exhibits strong arylesterase activity with beta-naphthyl acetate and phenyl acetate. May play a role in adipocyte differentiation. The chain is Adipocyte plasma membrane-associated protein (APMAP) from Homo sapiens (Human).